The following is a 440-amino-acid chain: (S)-N-methylcoclaurine 3'-hydroxylase-like protein (440 aa).

The chain crosses the membrane as a helical; Signal-anchor for type II membrane protein span at residues 2 to 21 (EIVTVALIAIVFTTFLYLIV). Cys-430 provides a ligand contact to heme.

The protein belongs to the cytochrome P450 family. The cofactor is heme.

It localises to the membrane. Functionally, involved in the biosynthesis of benzylisoquinoline alkaloids. Probably involved in papaverine biosynthesis since its transcripts are abundant only in cultivars with substantial papaverine accumulation. May catalyze the 3'-hydroxylation of (S)-coclaurine. This is (S)-N-methylcoclaurine 3'-hydroxylase-like protein from Papaver somniferum (Opium poppy).